A 121-amino-acid polypeptide reads, in one-letter code: Large ribosomal subunit protein P2 (121 aa).

Over residues 72-99 (VAVPSGGAPAAATAAAEAPKGGDKAAAP) the composition is skewed to low complexity. Positions 72 to 121 (VAVPSGGAPAAATAAAEAPKGGDKAAAPPKEEKKEESEESDADMGFSPFD) are disordered.

This sequence belongs to the eukaryotic ribosomal protein P1/P2 family. As to quaternary structure, P1 and P2 exist as dimers at the large ribosomal subunit. Phosphorylated.

In terms of biological role, plays an important role in the elongation step of protein synthesis. This is Large ribosomal subunit protein P2 from Taenia solium (Pork tapeworm).